We begin with the raw amino-acid sequence, 261 residues long: Cytochrome c oxidase subunit 3 (261 aa).

At 1–15 (MTHQTHAYHMVNPSP) the chain is on the mitochondrial matrix side. A helical transmembrane segment spans residues 16–34 (WPLTGALSALLMTSGLIMW). The Mitochondrial intermembrane portion of the chain corresponds to 35–40 (FHFNSM). Residues 41–66 (YLLMLGLTTNTLTMYQWWRDIVREST) form a helical membrane-spanning segment. At 67 to 72 (FQGHHT) the chain is on the mitochondrial matrix side. The chain crosses the membrane as a helical span at residues 73–105 (PIVQKGLRYGMILFIVSEVFFFAGFFWAFYHSS). Residues 106-128 (LAPTPELGGCWPPTGITPLNPME) are Mitochondrial intermembrane-facing. A helical membrane pass occupies residues 129 to 152 (VPLLNTSVLLASGVSITWAHHSLM). At 153-155 (EGN) the chain is on the mitochondrial matrix side. A helical membrane pass occupies residues 156–183 (RKHMLQALFITISLGVYFTLLQASEYYE). The Mitochondrial intermembrane portion of the chain corresponds to 184–190 (TPFTISD). A helical membrane pass occupies residues 191–223 (GIYGSTFFMATGFHGLHVIIGSTFLIVCFMRQL). At 224 to 232 (KFHFTSNHH) the chain is on the mitochondrial matrix side. A helical membrane pass occupies residues 233 to 256 (FGFEAAAWYWHFVDVVWLFLYVSI). Residues 257 to 261 (YWWGS) lie on the Mitochondrial intermembrane side of the membrane.

The protein belongs to the cytochrome c oxidase subunit 3 family. Component of the cytochrome c oxidase (complex IV, CIV), a multisubunit enzyme composed of 14 subunits. The complex is composed of a catalytic core of 3 subunits MT-CO1, MT-CO2 and MT-CO3, encoded in the mitochondrial DNA, and 11 supernumerary subunits COX4I, COX5A, COX5B, COX6A, COX6B, COX6C, COX7A, COX7B, COX7C, COX8 and NDUFA4, which are encoded in the nuclear genome. The complex exists as a monomer or a dimer and forms supercomplexes (SCs) in the inner mitochondrial membrane with NADH-ubiquinone oxidoreductase (complex I, CI) and ubiquinol-cytochrome c oxidoreductase (cytochrome b-c1 complex, complex III, CIII), resulting in different assemblies (supercomplex SCI(1)III(2)IV(1) and megacomplex MCI(2)III(2)IV(2)).

It localises to the mitochondrion inner membrane. It catalyses the reaction 4 Fe(II)-[cytochrome c] + O2 + 8 H(+)(in) = 4 Fe(III)-[cytochrome c] + 2 H2O + 4 H(+)(out). Component of the cytochrome c oxidase, the last enzyme in the mitochondrial electron transport chain which drives oxidative phosphorylation. The respiratory chain contains 3 multisubunit complexes succinate dehydrogenase (complex II, CII), ubiquinol-cytochrome c oxidoreductase (cytochrome b-c1 complex, complex III, CIII) and cytochrome c oxidase (complex IV, CIV), that cooperate to transfer electrons derived from NADH and succinate to molecular oxygen, creating an electrochemical gradient over the inner membrane that drives transmembrane transport and the ATP synthase. Cytochrome c oxidase is the component of the respiratory chain that catalyzes the reduction of oxygen to water. Electrons originating from reduced cytochrome c in the intermembrane space (IMS) are transferred via the dinuclear copper A center (CU(A)) of subunit 2 and heme A of subunit 1 to the active site in subunit 1, a binuclear center (BNC) formed by heme A3 and copper B (CU(B)). The BNC reduces molecular oxygen to 2 water molecules using 4 electrons from cytochrome c in the IMS and 4 protons from the mitochondrial matrix. The polypeptide is Cytochrome c oxidase subunit 3 (MT-CO3) (Halichoerus grypus (Gray seal)).